A 296-amino-acid polypeptide reads, in one-letter code: 33 kDa chaperonin (296 aa).

2 disulfide bridges follow: Cys-236/Cys-238 and Cys-269/Cys-272.

Belongs to the HSP33 family. In terms of processing, under oxidizing conditions two disulfide bonds are formed involving the reactive cysteines. Under reducing conditions zinc is bound to the reactive cysteines and the protein is inactive.

The protein resides in the cytoplasm. Functionally, redox regulated molecular chaperone. Protects both thermally unfolding and oxidatively damaged proteins from irreversible aggregation. Plays an important role in the bacterial defense system toward oxidative stress. The sequence is that of 33 kDa chaperonin from Lactobacillus helveticus (strain DPC 4571).